The sequence spans 475 residues: tRNA (guanine(37)-N(1))-methyltransferase (475 aa).

Residues H219, D258–L259, and D286–G287 each bind S-adenosyl-L-methionine. The segment at K306 to V328 is disordered. N349 serves as a coordination point for S-adenosyl-L-methionine. The segment covering N456–N469 has biased composition (polar residues). A disordered region spans residues N456 to T475.

This sequence belongs to the class I-like SAM-binding methyltransferase superfamily. TRM5/TYW2 family. Monomer.

It is found in the mitochondrion matrix. It localises to the nucleus. The protein resides in the cytoplasm. It carries out the reaction guanosine(37) in tRNA + S-adenosyl-L-methionine = N(1)-methylguanosine(37) in tRNA + S-adenosyl-L-homocysteine + H(+). In terms of biological role, specifically methylates the N1 position of guanosine-37 in various cytoplasmic and mitochondrial tRNAs. Methylation is not dependent on the nature of the nucleoside 5' of the target nucleoside. This is the first step in the biosynthesis of wybutosine (yW), a modified base adjacent to the anticodon of tRNAs and required for accurate decoding. In Batrachochytrium dendrobatidis (strain JAM81 / FGSC 10211) (Frog chytrid fungus), this protein is tRNA (guanine(37)-N(1))-methyltransferase.